The chain runs to 824 residues: Glycerol-3-phosphate acyltransferase (824 aa).

An HXXXXD motif motif is present at residues 302–307 (CHRSHM).

It belongs to the GPAT/DAPAT family.

Its subcellular location is the cell inner membrane. It catalyses the reaction sn-glycerol 3-phosphate + an acyl-CoA = a 1-acyl-sn-glycero-3-phosphate + CoA. Its pathway is phospholipid metabolism; CDP-diacylglycerol biosynthesis; CDP-diacylglycerol from sn-glycerol 3-phosphate: step 1/3. The protein is Glycerol-3-phosphate acyltransferase of Actinobacillus pleuropneumoniae serotype 7 (strain AP76).